The following is a 377-amino-acid chain: uncharacterized protein (377 aa).

32 to 39 (GPINSGKT) is a binding site for ATP.

This sequence belongs to the archaeal ATPase family.

This is an uncharacterized protein from Methanocaldococcus jannaschii (strain ATCC 43067 / DSM 2661 / JAL-1 / JCM 10045 / NBRC 100440) (Methanococcus jannaschii).